Reading from the N-terminus, the 406-residue chain is Cysteine desulfurase (406 aa).

N6-(pyridoxal phosphate)lysine is present on Lys-226. The active-site Cysteine persulfide intermediate is the Cys-364.

The protein belongs to the class-V pyridoxal-phosphate-dependent aminotransferase family. Csd subfamily. In terms of assembly, homodimer. Interacts with SufE and the SufBCD complex composed of SufB, SufC and SufD. The interaction with SufE is required to mediate the direct transfer of the sulfur atom from the S-sulfanylcysteine. Pyridoxal 5'-phosphate serves as cofactor.

It is found in the cytoplasm. The enzyme catalyses (sulfur carrier)-H + L-cysteine = (sulfur carrier)-SH + L-alanine. It catalyses the reaction L-selenocysteine + AH2 = hydrogenselenide + L-alanine + A + H(+). Its pathway is cofactor biosynthesis; iron-sulfur cluster biosynthesis. Functionally, cysteine desulfurases mobilize the sulfur from L-cysteine to yield L-alanine, an essential step in sulfur metabolism for biosynthesis of a variety of sulfur-containing biomolecules. Component of the suf operon, which is activated and required under specific conditions such as oxidative stress and iron limitation. Acts as a potent selenocysteine lyase in vitro, that mobilizes selenium from L-selenocysteine. Selenocysteine lyase activity is however unsure in vivo. This is Cysteine desulfurase from Yersinia pestis bv. Antiqua (strain Angola).